Here is a 635-residue protein sequence, read N- to C-terminus: 1-deoxy-D-xylulose-5-phosphate synthase (635 aa).

Residues His-78 and 119 to 121 (GHA) contribute to the thiamine diphosphate site. Residue Asp-151 participates in Mg(2+) binding. Residues 152–153 (GA), Asn-180, and Tyr-291 contribute to the thiamine diphosphate site. Asn-180 contributes to the Mg(2+) binding site. Residues 305–325 (PAFEDRGGTPVTRGSDGRPPY) form a disordered region. Glu-374 is a thiamine diphosphate binding site.

Belongs to the transketolase family. DXPS subfamily. In terms of assembly, homodimer. It depends on Mg(2+) as a cofactor. The cofactor is thiamine diphosphate.

It carries out the reaction D-glyceraldehyde 3-phosphate + pyruvate + H(+) = 1-deoxy-D-xylulose 5-phosphate + CO2. It functions in the pathway metabolic intermediate biosynthesis; 1-deoxy-D-xylulose 5-phosphate biosynthesis; 1-deoxy-D-xylulose 5-phosphate from D-glyceraldehyde 3-phosphate and pyruvate: step 1/1. Its function is as follows. Catalyzes the acyloin condensation reaction between C atoms 2 and 3 of pyruvate and glyceraldehyde 3-phosphate to yield 1-deoxy-D-xylulose-5-phosphate (DXP). The chain is 1-deoxy-D-xylulose-5-phosphate synthase from Rhodopirellula baltica (strain DSM 10527 / NCIMB 13988 / SH1).